A 339-amino-acid polypeptide reads, in one-letter code: Phenylalanine--tRNA ligase alpha subunit (339 aa).

Residue Glu250 coordinates Mg(2+).

It belongs to the class-II aminoacyl-tRNA synthetase family. Phe-tRNA synthetase alpha subunit type 1 subfamily. Tetramer of two alpha and two beta subunits. Mg(2+) is required as a cofactor.

It localises to the cytoplasm. It catalyses the reaction tRNA(Phe) + L-phenylalanine + ATP = L-phenylalanyl-tRNA(Phe) + AMP + diphosphate + H(+). This chain is Phenylalanine--tRNA ligase alpha subunit, found in Bacteroides fragilis (strain ATCC 25285 / DSM 2151 / CCUG 4856 / JCM 11019 / LMG 10263 / NCTC 9343 / Onslow / VPI 2553 / EN-2).